We begin with the raw amino-acid sequence, 236 residues long: UPF0257 lipoprotein YnfC (236 aa).

Positions 1 to 16 (MKKPLLLTLLCMILAG) are cleaved as a signal peptide. C17 carries the N-palmitoyl cysteine lipid modification. Residue C17 is the site of S-diacylglycerol cysteine attachment.

The protein belongs to the UPF0257 family.

It is found in the cell membrane. This chain is UPF0257 lipoprotein YnfC, found in Salmonella dublin (strain CT_02021853).